A 146-amino-acid chain; its full sequence is Hemoglobin subunit beta (146 aa).

An N-acetylvaline modification is found at Val-1. The 145-residue stretch at 2–146 (HLTDAEKALV…VATALAHKYH (145 aa)) folds into the Globin domain. The residue at position 12 (Thr-12) is a Phosphothreonine. Phosphoserine is present on Ser-44. Lys-59 bears the N6-acetyllysine mark. A heme b-binding site is contributed by His-63. The residue at position 82 (Lys-82) is an N6-acetyllysine. Heme b is bound at residue His-92. S-nitrosocysteine is present on Cys-93. The residue at position 144 (Lys-144) is an N6-acetyllysine.

This sequence belongs to the globin family. Heterotetramer of two alpha chains and two beta chains. Red blood cells.

In terms of biological role, involved in oxygen transport from the lung to the various peripheral tissues. The chain is Hemoglobin subunit beta from Peromyscus crinitus (Canyon mouse).